A 535-amino-acid polypeptide reads, in one-letter code: MKEALFGLYLVLLVSGLEAAVTKPNSGNFIECLRYQASPENPITDAIFTVDNTTTFLSSYVSYTKNTRFSNPNNKNLLAIVVAKDVSHVQATVVCAKSNGIQIRIRSGGHDNEGLSYVSSVPFVILDMHKLRDITVDVSSKKAWVQAGATLGELYVKIDEASQTLAFPAGICATVGAGGHISGGGYGNLMRKFGTTVDHVIDAELVDVNGKLLNRSTMGEDLFWAIRGGGGASFGVILSWKINLVEVPKIFTVFQVNKTLEQGGTDVVYKWQLVANKFPDNLFLRAMPQVVNGTKHGERTIAIVFWAQFLGRTDELMEIMNQSFPELGLRREDCQEMSWLNTTLFWAMLPAGTPKTVLLGRPTDPVFFKSKSDYVKKPIPKEGLEKIWKTMLKFNNIVWLHFNPYGGMMDRIPSNATAFPHRKGNLFKVQYYTTWLDPNATESNLSIMKELYEVAEPYVSSNPREAFFNYRDIDIGSNPSGETDVDEAKIYGYKYFLGNLKRLMDVKAKSDPENFFKNEQSIPPLLSRVRRDDEL.

A signal peptide spans 1–19 (MKEALFGLYLVLLVSGLEA). A disulfide bond links Cys-32 and Cys-95. Residue Asn-52 is glycosylated (N-linked (GlcNAc...) asparagine). An FAD-binding PCMH-type domain is found at 73–247 (NNKNLLAIVV…LSWKINLVEV (175 aa)). A cross-link (6-(S-cysteinyl)-8alpha-(pros-histidyl)-FAD (His-Cys)) is located at residues 110-172 (HDNEGLSYVS…QTLAFPAGIC (63 aa)). Asn-214, Asn-257, Asn-292, Asn-321, Asn-341, Asn-415, Asn-439, and Asn-444 each carry an N-linked (GlcNAc...) asparagine glycan.

This sequence belongs to the oxygen-dependent FAD-linked oxidoreductase family. FAD is required as a cofactor. Post-translationally, the FAD cofactor is bound via a bicovalent 6-S-cysteinyl, 8alpha-N1-histidyl FAD linkage.

Its subcellular location is the endoplasmic reticulum. The protein resides in the cell membrane. It is found in the secreted. The protein localises to the cell wall. In terms of biological role, flavin-dependent oxidoreductase involved in the biosynthetic pathway to 4-hydroxyindole-3-carbonyl nitrile (4-OH-ICN), a cyanogenic metabolite required for inducible pathogen defense. Converts indole cyanohydrin into indole-3-carbonyl nitrile (ICN). In Arabidopsis thaliana (Mouse-ear cress), this protein is Berberine bridge enzyme-like 3.